Here is a 129-residue protein sequence, read N- to C-terminus: MNSFVLMATVIREPELRFTKENQTPVCEFLVEFPGMRDDSPKESLKVVGWGNLANTIKETYHPGDRLIIEGRLGMNMIERQEGFKEKRAELTASRISLVDSGNGINPGELSSPPEPEAVDLSNTDDIPF.

In terms of domain architecture, SSB spans 1–100 (MNSFVLMATV…LTASRISLVD (100 aa)). Positions 99–129 (VDSGNGINPGELSSPPEPEAVDLSNTDDIPF) are disordered.

As to quaternary structure, homotetramer.

The protein localises to the cellular thylakoid membrane. This is Thylakoid-associated single-stranded DNA-binding protein slr1034 from Synechocystis sp. (strain ATCC 27184 / PCC 6803 / Kazusa).